Here is a 449-residue protein sequence, read N- to C-terminus: Elongation factor 1-alpha (449 aa).

Residues 5-234 (KQHVSIVVIG…DNCDPPKRPV (230 aa)) enclose the tr-type G domain. A G1 region spans residues 14-21 (GHVDSGKS). 14 to 21 (GHVDSGKS) is a GTP binding site. N6,N6-dimethyllysine is present on Lys55. The interval 70–74 (GITID) is G2. Lys79 bears the N6,N6,N6-trimethyllysine mark. The tract at residues 91 to 94 (DAPG) is G3. GTP-binding positions include 91–95 (DAPGH) and 153–156 (NKMD). Positions 153–156 (NKMD) are G4. Lys187 bears the N6,N6,N6-trimethyllysine mark. The tract at residues 194-196 (SGW) is G5. Lys265 carries the post-translational modification N6-methyllysine. 2 positions are modified to N6,N6,N6-trimethyllysine: Lys310 and Lys400.

The protein belongs to the TRAFAC class translation factor GTPase superfamily. Classic translation factor GTPase family. EF-Tu/EF-1A subfamily.

It localises to the cytoplasm. In terms of biological role, this protein promotes the GTP-dependent binding of aminoacyl-tRNA to the A-site of ribosomes during protein biosynthesis. In Pyropia yezoensis (Susabi-nori), this protein is Elongation factor 1-alpha.